A 200-amino-acid polypeptide reads, in one-letter code: MAKVLVLYYSSYGHVETMAQHIVEGAKSVPGVEVTLKRVPETIPVDQARAIGVKVDQAAPVATVDELADYDAIIFGTPTRFGNMAGQMRTFLDQTGGLWMKGALVGKIGSVFASTGTQHGGQETTITSFHTTLLHHGMVIVGVPYACSGLVNMNEITGGTPYGATTLAGADGSRQPSANELDIARYQGKHVAELANKLAS.

The 188-residue stretch at 4–191 (VLVLYYSSYG…DIARYQGKHV (188 aa)) folds into the Flavodoxin-like domain. FMN contacts are provided by residues 10–15 (SSYGHV) and 79–81 (TRF). Residue Y12 participates in NAD(+) binding. W99 serves as a coordination point for substrate. Residues 114 to 120 (STGTQHG) and H135 contribute to the FMN site.

It belongs to the WrbA family. Requires FMN as cofactor.

It catalyses the reaction a quinone + NADH + H(+) = a quinol + NAD(+). The enzyme catalyses a quinone + NADPH + H(+) = a quinol + NADP(+). The chain is NAD(P)H dehydrogenase (quinone) from Burkholderia cenocepacia (strain ATCC BAA-245 / DSM 16553 / LMG 16656 / NCTC 13227 / J2315 / CF5610) (Burkholderia cepacia (strain J2315)).